The chain runs to 177 residues: Large ribosomal subunit protein uL10 (177 aa).

The protein belongs to the universal ribosomal protein uL10 family. As to quaternary structure, part of the ribosomal stalk of the 50S ribosomal subunit. The N-terminus interacts with L11 and the large rRNA to form the base of the stalk. The C-terminus forms an elongated spine to which L12 dimers bind in a sequential fashion forming a multimeric L10(L12)X complex.

Its function is as follows. Forms part of the ribosomal stalk, playing a central role in the interaction of the ribosome with GTP-bound translation factors. The polypeptide is Large ribosomal subunit protein uL10 (Xanthomonas campestris pv. campestris (strain 8004)).